The sequence spans 119 residues: Large ribosomal subunit protein bL20c (119 aa).

It belongs to the bacterial ribosomal protein bL20 family.

Its subcellular location is the plastid. The protein resides in the chloroplast. Binds directly to 23S ribosomal RNA and is necessary for the in vitro assembly process of the 50S ribosomal subunit. It is not involved in the protein synthesizing functions of that subunit. In Brachypodium distachyon (Purple false brome), this protein is Large ribosomal subunit protein bL20c.